We begin with the raw amino-acid sequence, 371 residues long: uncharacterized protein (371 aa).

It belongs to the glycerate kinase type-1 family.

This is an uncharacterized protein from Synechocystis sp. (strain ATCC 27184 / PCC 6803 / Kazusa).